The primary structure comprises 299 residues: Protoheme IX farnesyltransferase 1 (299 aa).

The next 9 helical transmembrane spans lie at 24-44 (VVAL…PGVP), 46-66 (AAVV…AAMV), 97-117 (LLVA…CCNA), 118-138 (LTAW…TLLL), 146-166 (IVIG…AVNG), 170-190 (AFAL…FWAL), 217-237 (LSIV…VALG), 239-259 (AGAI…FLAV), and 278-298 (IWYL…LIPL).

The protein belongs to the UbiA prenyltransferase family. Protoheme IX farnesyltransferase subfamily.

The protein localises to the cell inner membrane. The enzyme catalyses heme b + (2E,6E)-farnesyl diphosphate + H2O = Fe(II)-heme o + diphosphate. It functions in the pathway porphyrin-containing compound metabolism; heme O biosynthesis; heme O from protoheme: step 1/1. Converts heme B (protoheme IX) to heme O by substitution of the vinyl group on carbon 2 of heme B porphyrin ring with a hydroxyethyl farnesyl side group. This chain is Protoheme IX farnesyltransferase 1, found in Chromobacterium violaceum (strain ATCC 12472 / DSM 30191 / JCM 1249 / CCUG 213 / NBRC 12614 / NCIMB 9131 / NCTC 9757 / MK).